The primary structure comprises 89 residues: U-scoloptoxin(12)-Er1a (89 aa).

The first 22 residues, 1 to 22, serve as a signal peptide directing secretion; that stretch reads MKGLFLVVFLMWFVSQMNTEET.

This sequence belongs to the scoloptoxin-12 family. Contains 3 disulfide bonds. In terms of tissue distribution, expressed by the venom gland.

It is found in the secreted. In Ethmostigmus rubripes (Giant centipede), this protein is U-scoloptoxin(12)-Er1a.